We begin with the raw amino-acid sequence, 397 residues long: Succinyl-diaminopimelate desuccinylase (397 aa).

A Zn(2+)-binding site is contributed by His-73. Asp-75 is an active-site residue. Asp-106 lines the Zn(2+) pocket. The active-site Proton acceptor is the Glu-140. Zn(2+) contacts are provided by Glu-141, Glu-169, and His-366.

Belongs to the peptidase M20A family. DapE subfamily. In terms of assembly, homodimer. Requires Zn(2+) as cofactor. Co(2+) is required as a cofactor.

It catalyses the reaction N-succinyl-(2S,6S)-2,6-diaminopimelate + H2O = (2S,6S)-2,6-diaminopimelate + succinate. The protein operates within amino-acid biosynthesis; L-lysine biosynthesis via DAP pathway; LL-2,6-diaminopimelate from (S)-tetrahydrodipicolinate (succinylase route): step 3/3. In terms of biological role, catalyzes the hydrolysis of N-succinyl-L,L-diaminopimelic acid (SDAP), forming succinate and LL-2,6-diaminopimelate (DAP), an intermediate involved in the bacterial biosynthesis of lysine and meso-diaminopimelic acid, an essential component of bacterial cell walls. The chain is Succinyl-diaminopimelate desuccinylase from Rhizobium meliloti (strain 1021) (Ensifer meliloti).